The sequence spans 221 residues: Lipoprotein-releasing system ATP-binding protein LolD (221 aa).

An ABC transporter domain is found at 6-220; that stretch reads LILKNISKHY…YKLKHRLLNI (215 aa). 42–49 contacts ATP; it reads GSSGSGKS.

It belongs to the ABC transporter superfamily. Lipoprotein translocase (TC 3.A.1.125) family. As to quaternary structure, the complex is composed of two ATP-binding proteins (LolD) and two transmembrane proteins (LolC and LolE).

Its subcellular location is the cell inner membrane. Its function is as follows. Part of the ABC transporter complex LolCDE involved in the translocation of mature outer membrane-directed lipoproteins, from the inner membrane to the periplasmic chaperone, LolA. Responsible for the formation of the LolA-lipoprotein complex in an ATP-dependent manner. The polypeptide is Lipoprotein-releasing system ATP-binding protein LolD (Rickettsia conorii (strain ATCC VR-613 / Malish 7)).